The sequence spans 669 residues: DNA ligase (669 aa).

NAD(+)-binding positions include 33–37, 82–83, and E115; these read DVTYD and SL. K117 (N6-AMP-lysine intermediate) is an active-site residue. The NAD(+) site is built by R138, E172, K286, and K310. C401, C404, C417, and C422 together coordinate Zn(2+). The BRCT domain maps to 589–669; that stretch reads IDSSFLFGKK…DIKNLVNLDD (81 aa).

It belongs to the NAD-dependent DNA ligase family. LigA subfamily. It depends on Mg(2+) as a cofactor. Mn(2+) serves as cofactor.

It catalyses the reaction NAD(+) + (deoxyribonucleotide)n-3'-hydroxyl + 5'-phospho-(deoxyribonucleotide)m = (deoxyribonucleotide)n+m + AMP + beta-nicotinamide D-nucleotide.. DNA ligase that catalyzes the formation of phosphodiester linkages between 5'-phosphoryl and 3'-hydroxyl groups in double-stranded DNA using NAD as a coenzyme and as the energy source for the reaction. It is essential for DNA replication and repair of damaged DNA. The protein is DNA ligase of Borrelia recurrentis (strain A1).